A 393-amino-acid chain; its full sequence is Adaptive-response sensory kinase SasA (393 aa).

In terms of domain architecture, Histidine kinase spans 171 to 393 (MLAHDLRSPL…CFHFTLPVFR (223 aa)). H174 is modified (phosphohistidine; by autocatalysis).

Homooligomerizes. Interacts with KaiC. Participates in the KaiABC clock complex, whose core is composed of a KaiC homohexamer, 6 KaiB and up to 6 KaiA dimers. SasA and KaiB(fs) compete to bind to KaiC.

It carries out the reaction ATP + protein L-histidine = ADP + protein N-phospho-L-histidine.. In terms of biological role, member of the two-component regulatory system SasA/RpaA involved in genome-wide circadian gene expression. One of several clock output pathways. Participates in the Kai clock protein complex, the main circadian regulator in cyanobacteria, via its interaction with KaiC. KaiC enhances the autophosphorylation activity of SasA, which then transfers its phosphate group to RpaA to activate it. In addition to its output function, recruits fold-shifted KaiB (KaiB(fs)) to KaiC to cooperatively form the KaiB(6):KaiC(6) complex (independent of SasA kinase activity). Required for robustness of the circadian rhythm of gene expression and is involved in clock output, also required for adaptation to light/dark cycles. The sequence is that of Adaptive-response sensory kinase SasA from Gloeothece citriformis (strain PCC 7424) (Cyanothece sp. (strain PCC 7424)).